The chain runs to 142 residues: Large ribosomal subunit protein uL13 (142 aa).

It belongs to the universal ribosomal protein uL13 family. As to quaternary structure, part of the 50S ribosomal subunit.

This protein is one of the early assembly proteins of the 50S ribosomal subunit, although it is not seen to bind rRNA by itself. It is important during the early stages of 50S assembly. In Psychrobacter cryohalolentis (strain ATCC BAA-1226 / DSM 17306 / VKM B-2378 / K5), this protein is Large ribosomal subunit protein uL13.